A 474-amino-acid chain; its full sequence is Glutamate--tRNA ligase (474 aa).

Positions 9–19 (PSPTGYLHVGG) match the 'HIGH' region motif. The 'KMSKS' region signature appears at 240–244 (KLSKR). An ATP-binding site is contributed by Lys243.

The protein belongs to the class-I aminoacyl-tRNA synthetase family. Glutamate--tRNA ligase type 1 subfamily. As to quaternary structure, monomer.

The protein localises to the cytoplasm. It carries out the reaction tRNA(Glu) + L-glutamate + ATP = L-glutamyl-tRNA(Glu) + AMP + diphosphate. Catalyzes the attachment of glutamate to tRNA(Glu) in a two-step reaction: glutamate is first activated by ATP to form Glu-AMP and then transferred to the acceptor end of tRNA(Glu). This is Glutamate--tRNA ligase from Aliivibrio salmonicida (strain LFI1238) (Vibrio salmonicida (strain LFI1238)).